A 232-amino-acid chain; its full sequence is Rho-related GTP-binding protein Rho6 (232 aa).

GTP-binding positions include 23–28 (QCGKTA), 38–45 (YPETYVPT), 67–71 (DTSGS), 125–128 (CKTD), and 169–170 (AF). Positions 42–50 (YVPTVFENY) match the Effector region motif. A Cysteine methyl ester modification is found at C229. A lipid anchor (S-geranylgeranyl cysteine) is attached at C229. The propeptide at 230-232 (SIM) is removed in mature form.

This sequence belongs to the small GTPase superfamily. Rho family. Binds GRB7 and PLXNB1. Interacts with PLXNA2. Interacts with UBXD5.

Its subcellular location is the cell membrane. It is found in the cytoplasm. The protein resides in the cytoskeleton. In terms of biological role, lacks intrinsic GTPase activity. Has a low affinity for GDP, and constitutively binds GTP. Controls rearrangements of the actin cytoskeleton. Induces the Rac-dependent neuritic process formation in part by disruption of the cortical actin filaments. Causes the formation of many neuritic processes from the cell body with disruption of the cortical actin filaments. The sequence is that of Rho-related GTP-binding protein Rho6 (Rnd1) from Mus musculus (Mouse).